A 295-amino-acid chain; its full sequence is MMQTPYTTSTQGQYCHSCGMFHHHSQSCCYNNNNNSNAGSYSMVFSMQNGGVFEQNGEDYHHSSSLVDCTLSLGTPSTRLCEEDEKRRRSTSSGASSCISNFWDLIHTKNNNSKTAPYNNVPSFSANKPSRGCSGGGGGGGGGGGGDSLLARRCANCDTTSTPLWRNGPRGPKSLCNACGIRFKKEERRTTAATGNTVVGAAPVQTDQYGHHNSGYNNYHAATNNNNNNGTPWAHHHSTQRVPCNYPANEIRFMDDYGSGVANNVESDGAHGGVPFLSWRLNVADRASLVHDFTR.

A GATA-type zinc finger spans residues serine 148–alanine 202.

It belongs to the type IV zinc-finger family. Class B subfamily. As to quaternary structure, homodimer. Forms heterodimers with GATA19, GATA22 and GATA21. Interacts with JAG. Binds to AGO10/PNH. As to expression, expressed in vegetative and inflorescence shoot apical meristems (SAMs), axillary (SAMs), floral meristems, developing ovules and stamens, vascular tissues, and in the embryo.

The protein resides in the nucleus. In terms of biological role, transcriptional factor that specifically binds 5'-GATA-3' or 5'-GAT-3' motifs within gene promoters (including its own promoter and GATA21 promoter), thus regulating the expression of genes mostly involved in hormone responses and floral organ specification (including genes regulating hormones responses). Regulates both flower and shoot apical meristem (SAM) development, especially for establishing organ boundaries in shoots and flowers, probably by controlling the number and position of WUS-expressing cells. Coregulates, with AGO10/PNH, the shoot apical meristem (SAM) organization. Regulates floral organ development via the promotion of JAG and NPR5/BOP2 expression. Modulates cytokinin homeostasis in organ boundaries by regulating CKX3 expression. Involved in cell proliferation and differentiation. Required to position the inductive proembryo boundary via the regulation of gene expression and for early embryonic development. Together with GIF1/AN3, mediates cotyledon identity by preventing ectopic root formation through the repression of PLT1 expression. The polypeptide is GATA transcription factor 18 (Arabidopsis thaliana (Mouse-ear cress)).